The following is a 457-amino-acid chain: Putative adhesion G protein-coupled receptor E4P (457 aa).

A signal peptide spans 1-14 (MGSRFLLVLLSGAS). 6 disulfides stabilise this stretch: C15/C24, C18/C30, C32/C52, C58/C71, C65/C80, and C82/C103. Residues 15 to 53 (CPPCPKYASCHNSTHCTCEDGFRARSGRTYFHDSSEKCE) form the EGF-like 1 domain. Residues 16-191 (PPCPKYASCH…LAPKEDPVLT (176 aa)) lie on the Extracellular side of the membrane. N26 carries N-linked (GlcNAc...) asparagine glycosylation. Positions 54-104 (DINECETGLAKCKYKAYCRNKVGGYICSCLVKYTLFNFLAGIIDYDHPDCY) constitute an EGF-like 2; calcium-binding domain. N106 and N162 each carry an N-linked (GlcNAc...) asparagine glycan. Positions 134 to 186 (DKRTKHICVYWEGSEGGWSTEGCSHVHSNGSYTKCKCFHLSSFAVLVALAPKE) constitute a GAIN-B domain. 2 cysteine pairs are disulfide-bonded: C141–C168 and C156–C170. The segment at 141–186 (CVYWEGSEGGWSTEGCSHVHSNGSYTKCKCFHLSSFAVLVALAPKE) is GPS. A helical membrane pass occupies residues 192-212 (VITQVGLTISLLCLFLAILTF). Residues 213–223 (LLCRPIQNTST) lie on the Cytoplasmic side of the membrane. Residues 224–244 (SLHLELSLCLFLAHLLFLTGI) traverse the membrane as a helical segment. N245 carries an N-linked (GlcNAc...) asparagine glycan. The Extracellular portion of the chain corresponds to 245 to 250 (NRTEPE). Residues 251-271 (VLCSIIAGLLHFLYLACFTWM) form a helical membrane-spanning segment. The Cytoplasmic portion of the chain corresponds to 272–299 (LLEGLHLFLTVRNLKVANYTSTGRFKKR). The chain crosses the membrane as a helical span at residues 300–320 (FMYPVGYGIPAVIIAVSAIVG). Residues 321 to 336 (PQNYGTFTCWLKLDKG) lie on the Extracellular side of the membrane. A helical membrane pass occupies residues 337 to 357 (FIWSFMGPVAVIILINLVFYF). Residues 358–384 (QVLWILRSKLSSLNKEVSTIQDTRVMT) are Cytoplasmic-facing. The chain crosses the membrane as a helical span at residues 385–405 (FKAISQLFILGCSWGLGFFMV). Residues 406–413 (EEVGKTIG) are Extracellular-facing. Residues 414–434 (SIIAYSFTIINTLQGVLLFVV) traverse the membrane as a helical segment. At 435–457 (HCLLNRQVRLIILSVISLVPKSN) the chain is on the cytoplasmic side.

This sequence belongs to the G-protein coupled receptor 2 family. Adhesion G-protein coupled receptor (ADGR) subfamily. In terms of assembly, forms a heterodimer, consisting of a large extracellular region (alpha subunit) non-covalently linked to a seven-transmembrane moiety (beta subunit). Post-translationally, glycosylated. Proteolytically cleaved into 2 subunits, an extracellular alpha subunit and a seven-transmembrane subunit.

It is found in the cell membrane. The protein resides in the secreted. May mediate the cellular interaction between myeloid cells and B-cells. This is Putative adhesion G protein-coupled receptor E4P from Homo sapiens (Human).